We begin with the raw amino-acid sequence, 256 residues long: Non-specific lipid transfer protein GPI-anchored 23 (256 aa).

The N-terminal stretch at 1–21 (MKPSFVLLSIVLLLSSSLSDA) is a signal peptide. An N-linked (GlcNAc...) asparagine glycan is attached at N41. Cystine bridges form between C45–C88, C55–C72, C73–C113, and C86–C121. A disordered region spans residues 125–230 (TPAASTPVSP…SPSPSPSPSI (106 aa)). A compositionally biased stretch (low complexity) spans 138-230 (SPTTSPSSAK…SPSPSPSPSI (93 aa)). S225 carries GPI-anchor amidated serine lipidation. Residues 226–256 (PSPSISSSGILLVSKLFIAVVMVSSFLYILA) constitute a propeptide, removed in mature form.

Belongs to the plant LTP family. As to expression, confined to the anthers of the inflorescence.

It localises to the cell membrane. Probable lipid transfer protein. This Arabidopsis thaliana (Mouse-ear cress) protein is Non-specific lipid transfer protein GPI-anchored 23.